The primary structure comprises 398 residues: Large ribosomal subunit protein uL3 (398 aa).

Residues 1–10 are compositionally biased toward basic and acidic residues; it reads MSHRKFEAPR. The disordered stretch occupies residues 1 to 34; the sequence is MSHRKFEAPRHGNLGFRPRKRAARHQGKVKSFPK. Over residues 17 to 28 the composition is skewed to basic residues; the sequence is RPRKRAARHQGK.

Belongs to the universal ribosomal protein uL3 family.

The protein resides in the cytoplasm. Functionally, the L3 protein is a component of the large subunit of cytoplasmic ribosomes. The sequence is that of Large ribosomal subunit protein uL3 (rpl3) from Dictyostelium discoideum (Social amoeba).